Here is a 547-residue protein sequence, read N- to C-terminus: Serine/threonine-protein kinase pkn3 (547 aa).

One can recognise a Protein kinase domain in the interval 18-288; sequence YRVEALIGEG…EAFKAELQAV (271 aa). Residues 24-32 and Lys-47 contribute to the ATP site; that span reads IGEGGMGKV. The Proton acceptor role is filled by Asp-142. The segment covering 290-299 has biased composition (basic and acidic residues); sequence KERRRMDSAP. The segment at 290 to 327 is disordered; sequence KERRRMDSAPRRSANSSAVLAPLPRKSAASPQSDVRDA.

Belongs to the protein kinase superfamily. Ser/Thr protein kinase family.

It carries out the reaction L-seryl-[protein] + ATP = O-phospho-L-seryl-[protein] + ADP + H(+). It catalyses the reaction L-threonyl-[protein] + ATP = O-phospho-L-threonyl-[protein] + ADP + H(+). The polypeptide is Serine/threonine-protein kinase pkn3 (pkn3) (Myxococcus xanthus).